A 124-amino-acid chain; its full sequence is NADH-quinone oxidoreductase subunit K (124 aa).

A run of 3 helical transmembrane segments spans residues 28-48 (MEHG…GVMV), 52-72 (FLFM…AFIV), and 84-104 (IMFI…LAIL).

The protein belongs to the complex I subunit 4L family. As to quaternary structure, NDH-1 is composed of 14 different subunits. Subunits NuoA, H, J, K, L, M, N constitute the membrane sector of the complex.

Its subcellular location is the cell inner membrane. It carries out the reaction a quinone + NADH + 5 H(+)(in) = a quinol + NAD(+) + 4 H(+)(out). In terms of biological role, NDH-1 shuttles electrons from NADH, via FMN and iron-sulfur (Fe-S) centers, to quinones in the respiratory chain. The immediate electron acceptor for the enzyme in this species is believed to be ubiquinone. Couples the redox reaction to proton translocation (for every two electrons transferred, four hydrogen ions are translocated across the cytoplasmic membrane), and thus conserves the redox energy in a proton gradient. The sequence is that of NADH-quinone oxidoreductase subunit K from Psychrobacter sp. (strain PRwf-1).